A 135-amino-acid polypeptide reads, in one-letter code: Large ribosomal subunit protein uL16c (135 aa).

It belongs to the universal ribosomal protein uL16 family. In terms of assembly, part of the 50S ribosomal subunit.

The protein localises to the plastid. Its subcellular location is the chloroplast. The chain is Large ribosomal subunit protein uL16c from Daucus carota (Wild carrot).